The chain runs to 459 residues: Trigger factor (459 aa).

Positions 161–246 constitute a PPIase FKBP-type domain; it reads GDKVVIDFQG…IKKIMEGKLP (86 aa).

This sequence belongs to the FKBP-type PPIase family. Tig subfamily.

The protein resides in the cytoplasm. The catalysed reaction is [protein]-peptidylproline (omega=180) = [protein]-peptidylproline (omega=0). Functionally, involved in protein export. Acts as a chaperone by maintaining the newly synthesized protein in an open conformation. Functions as a peptidyl-prolyl cis-trans isomerase. The chain is Trigger factor from Legionella pneumophila (strain Corby).